A 460-amino-acid polypeptide reads, in one-letter code: Diguanylate cyclase DosC (460 aa).

His-98 contributes to the heme binding site. Positions Thr-325–Ala-458 constitute a GGDEF domain. Asp-333 lines the Mg(2+) pocket. Residues Asn-341 and Asp-350 each contribute to the substrate site. Asp-376 is a binding site for Mg(2+). Asp-376 (proton acceptor) is an active-site residue.

It depends on heme as a cofactor. Mg(2+) is required as a cofactor.

The enzyme catalyses 2 GTP = 3',3'-c-di-GMP + 2 diphosphate. Its pathway is purine metabolism; 3',5'-cyclic di-GMP biosynthesis. Functionally, globin-coupled heme-based oxygen sensor protein displaying diguanylate cyclase (DGC) activity in response to oxygen availability. Thus, catalyzes the synthesis of cyclic diguanylate (c-di-GMP) via the condensation of 2 GTP molecules. Cyclic-di-GMP is a second messenger which controls cell surface-associated traits in bacteria. The protein is Diguanylate cyclase DosC (dosC) of Shigella sonnei (strain Ss046).